Consider the following 83-residue polypeptide: Vitellogenesis-inhibiting hormone (83 aa).

3 disulfide bridges follow: Cys15–Cys52, Cys32–Cys48, and Cys35–Cys61.

In terms of tissue distribution, found in the sinus glands of both male and female. Found also in the brain; the neuroendocrine structures of the protocerebrum.

It is found in the secreted. Inhibits secondary vitellogenesis in females. Has no hyperglycemic or molt-inhibiting activity. The chain is Vitellogenesis-inhibiting hormone from Armadillidium vulgare (Pillbug).